The primary structure comprises 245 residues: Small ribosomal subunit protein uS2 (245 aa).

Belongs to the universal ribosomal protein uS2 family.

This chain is Small ribosomal subunit protein uS2, found in Pseudomonas fluorescens (strain ATCC BAA-477 / NRRL B-23932 / Pf-5).